Here is a 356-residue protein sequence, read N- to C-terminus: Malate dehydrogenase, glyoxysomal (356 aa).

Residues 1–36 constitute a glyoxysome transit peptide; it reads MEDAAAAARRMERLASHLRPPASQMEESPLLRGSNC. NAD(+) is bound by residues 51-57 and Asp-77; that span reads GASGGIG. Positions 124 and 130 each coordinate substrate. Residues Asn-137 and 160 to 162 contribute to the NAD(+) site; that span reads ISN. Positions 162 and 196 each coordinate substrate. The active-site Proton acceptor is His-220. Met-271 contributes to the NAD(+) binding site.

Belongs to the LDH/MDH superfamily. MDH type 1 family. In terms of assembly, homodimer.

The protein localises to the glyoxysome. It catalyses the reaction (S)-malate + NAD(+) = oxaloacetate + NADH + H(+). This Oryza sativa subsp. japonica (Rice) protein is Malate dehydrogenase, glyoxysomal.